The chain runs to 362 residues: Exopolygalacturonase (362 aa).

PbH1 repeat units follow at residues Cys138–Arg164, Ser165–Asp186, Ser188–Ser208, and Val218–Thr239. Asn140 carries an N-linked (GlcNAc...) asparagine glycan. Residue Asp179 is the Proton donor of the active site. Asn192 and Asn195 each carry an N-linked (GlcNAc...) asparagine glycan. His202 is a catalytic residue. Residue Asn225 is glycosylated (N-linked (GlcNAc...) asparagine).

It belongs to the glycosyl hydrolase 28 family. Pollen tubes growing through the style during pollination.

Its subcellular location is the secreted. The protein localises to the cell wall. It catalyses the reaction [(1-&gt;4)-alpha-D-galacturonosyl](n) + H2O = alpha-D-galacturonate + [(1-&gt;4)-alpha-D-galacturonosyl](n-1). Functionally, may function in depolymerizing pectin during pollen development, germination, and tube growth. Acts as an exo-polygalacturonase. The sequence is that of Exopolygalacturonase from Oenothera organensis (Evening primrose).